Consider the following 501-residue polypeptide: Dipeptide and tripeptide permease A (501 aa).

Residues 1–34 lie on the Cytoplasmic side of the membrane; the sequence is MSTANNKPTESVSLNAFKQPKSFYLIFSIELWER. The chain crosses the membrane as a helical span at residues 35-55; the sequence is FGYYGLQGIMAVYLVKQLGMS. Residues 56–59 are Periplasmic-facing; it reads EADS. Residues 60 to 80 traverse the membrane as a helical segment; sequence ITLFSSFSALVYGLVAIGGWL. Residues 81-89 lie on the Cytoplasmic side of the membrane; sequence GDKVLGTKR. The chain crosses the membrane as a helical span at residues 90-110; sequence VIMLGAIVLAIGYGLVAWSGH. A topological domain (periplasmic) is located at residue Asp111. A helical membrane pass occupies residues 112–132; the sequence is VAIVYMGMATIAVGNGLFKAN. Residues 133–153 lie on the Cytoplasmic side of the membrane; it reads PSSLLSTCYAKDDPRLDGAFT. A helical transmembrane segment spans residues 154 to 174; that stretch reads MYYMSINIGSFFSMLATPWLA. Residues 175-178 lie on the Periplasmic side of the membrane; the sequence is AKFG. A helical membrane pass occupies residues 179–199; it reads WSVAFALSFVGMLITVVNFLF. The Cytoplasmic portion of the chain corresponds to 200–217; it reads CRSWVKDYGSKPDFEAVH. The chain crosses the membrane as a helical span at residues 218–238; that stretch reads FGKLLATIAGVIVLIAIATWL. Over 239–246 the chain is Periplasmic; sequence LHNQGIAR. Residues 247 to 267 traverse the membrane as a helical segment; sequence MVLGVIALGIVIIFGKEAFAM. Topologically, residues 268-274 are cytoplasmic; that stretch reads QGAARRK. A helical transmembrane segment spans residues 275–295; sequence MIVAFILMLEAIIFFVLYSQM. Over 296 to 320 the chain is Periplasmic; it reads PTSLNFFAIRNVEHTILGIAVEPEQ. A helical transmembrane segment spans residues 321 to 341; sequence YQALNPFWIIIGSPILAAIYN. Residues 342 to 352 lie on the Cytoplasmic side of the membrane; it reads KMGDTLPMPTK. A helical transmembrane segment spans residues 353 to 373; sequence FAIGMVLCSGAFLVLPLGAKF. Residues 374-383 lie on the Periplasmic side of the membrane; that stretch reads ATDAGIVSVN. A helical transmembrane segment spans residues 384 to 404; it reads WLILSYGLQSIGELMISGLGL. Over 405 to 414 the chain is Cytoplasmic; that stretch reads AMVAQLVPQR. The chain crosses the membrane as a helical span at residues 415-435; it reads LMGFIMGSWFLTTAGANLIGG. Topologically, residues 436–459 are periplasmic; that stretch reads YVAGMMAVPENVTDPLMSLEVYGR. A helical membrane pass occupies residues 460-480; that stretch reads VFLQIGVATAVIAALMLITAP. Topologically, residues 481–501 are cytoplasmic; the sequence is KLNRMTQDDEENAKAAKTATA.

Belongs to the major facilitator superfamily. Proton-dependent oligopeptide transporter (POT/PTR) (TC 2.A.17) family. DtpA subfamily.

Its subcellular location is the cell inner membrane. Functionally, proton-dependent permease that transports di- and tripeptides. This chain is Dipeptide and tripeptide permease A, found in Citrobacter koseri (strain ATCC BAA-895 / CDC 4225-83 / SGSC4696).